The following is a 354-amino-acid chain: Peptide-N(4)-(N-acetyl-beta-D-glucosaminyl)asparagine amidase F (354 aa).

The signal sequence occupies residues 1–40 (MRKLLIFSISAYLMAGIVSCKGVDSATPVTEDRLALNAVN). Cysteine 91 and cysteine 96 form a disulfide bridge. Catalysis depends on residues aspartate 100, glutamate 158, and glutamate 246. Cystine bridges form between cysteine 244–cysteine 248 and cysteine 271–cysteine 292.

As to quaternary structure, monomer.

The catalysed reaction is Hydrolysis of an N(4)-(acetyl-beta-D-glucosaminyl)asparagine residue in which the glucosamine residue may be further glycosylated, to yield a (substituted) N-acetyl-beta-D-glucosaminylamine and a peptide containing an aspartate residue.. Functionally, cleaves an entire glycan from a glycoprotein. Requires that the glycosylated asparagine moiety (reaction 1) be substituted on its amino (R1) and carboxyl (R2) terminus with a polypeptide chain. This is Peptide-N(4)-(N-acetyl-beta-D-glucosaminyl)asparagine amidase F (ngl) from Elizabethkingia miricola (Chryseobacterium miricola).